Consider the following 111-residue polypeptide: Universal stress protein B (111 aa).

2 helical membrane-spanning segments follow: residues 1 to 21 (MISTVALFWALCVVCVINMAR) and 90 to 110 (FILTSALCGLVMVSLVGLILW).

Belongs to the universal stress protein B family.

The protein resides in the cell inner membrane. The polypeptide is Universal stress protein B (Yersinia enterocolitica serotype O:8 / biotype 1B (strain NCTC 13174 / 8081)).